The following is a 474-amino-acid chain: N-lysine methyltransferase SETD6 (474 aa).

Ser-14 carries the phosphoserine modification. The 225-residue stretch at 63–287 (PKVLVSRQGT…KGHEIFNTYG (225 aa)) folds into the SET domain. Lys-64 bears the N6-methylated lysine; by autocatalysis mark. An S-adenosyl-L-methionine-binding site is contributed by 74 to 76 (AGY). Trp-123 lines the substrate pocket. At Lys-180 the chain carries N6-methylated lysine; by autocatalysis. Residue Tyr-224 participates in S-adenosyl-L-methionine binding. Residues Ser-225 and Gln-227 each coordinate substrate. S-adenosyl-L-methionine is bound by residues 252 to 253 (NH) and Tyr-298. Lys-373 is modified (N6-methylated lysine; by autocatalysis).

The protein belongs to the class V-like SAM-binding methyltransferase superfamily. Histone-lysine methyltransferase family. SETD6 subfamily. As to quaternary structure, monomer, homodimer and homotrimer; these structures are stabilized in the presence of S-adenosyl-L-methionine (SAM). In terms of processing, automethylated.

It localises to the nucleus. The enzyme catalyses L-lysyl-[protein] + S-adenosyl-L-methionine = N(6)-methyl-L-lysyl-[protein] + S-adenosyl-L-homocysteine + H(+). The catalysed reaction is L-lysyl(8)-[histone H2AZ] + S-adenosyl-L-methionine = N(6)-methyl-L-lysyl(8)-[histone H2AZ] + S-adenosyl-L-homocysteine + H(+). Its function is as follows. Protein-lysine N-methyltransferase. Monomethylates 'Lys-310' of the RELA subunit of NF-kappa-B complex, leading to down-regulation of NF-kappa-B transcription factor activity. Monomethylates 'Lys-8' of H2AZ (H2AZK8me1). Required for the maintenance of embryonic stem cell self-renewal. Methylates PAK4. In Rattus norvegicus (Rat), this protein is N-lysine methyltransferase SETD6 (Setd6).